The chain runs to 188 residues: Elongation factor P-like protein (188 aa).

The protein belongs to the elongation factor P family.

This is Elongation factor P-like protein from Vibrio parahaemolyticus serotype O3:K6 (strain RIMD 2210633).